The sequence spans 102 residues: Small ribosomal subunit protein uS10 (102 aa).

It belongs to the universal ribosomal protein uS10 family. Part of the 30S ribosomal subunit.

In terms of biological role, involved in the binding of tRNA to the ribosomes. The chain is Small ribosomal subunit protein uS10 from Planobispora rosea.